Reading from the N-terminus, the 626-residue chain is Two-component response regulator ORR24 (626 aa).

The interval 1–22 (MTVEERQGRVGGHGVSGGGGGR) is disordered. Residues 9–22 (RVGGHGVSGGGGGR) show a composition bias toward gly residues. In terms of domain architecture, Response regulatory spans 30 to 145 (RVLAVDDDPT…QLRTIWQHVI (116 aa)). D81 bears the 4-aspartylphosphate mark. Residues 151-162 (DAKNRGNDDDAG) are compositionally biased toward basic and acidic residues. 2 disordered regions span residues 151 to 215 (DAKN…KKPR) and 400 to 440 (LQPL…RTTN). The span at 191–202 (NGDDGDDSDENS) shows a compositional bias: acidic residues. A DNA-binding region (myb-like GARP) is located at residues 210-269 (TQKKPRVVWSVELHRKFVAAVNQLGIEKAVPKKILDLMNVENITRENVASHLQKYRLYLK). Residues 400–421 (LQPLESSSQQHLSRVHSSSADP) show a composition bias toward polar residues.

The protein belongs to the ARR family. Type-B subfamily. Two-component system major event consists of a His-to-Asp phosphorelay between a sensor histidine kinase (HK) and a response regulator (RR). In plants, the His-to-Asp phosphorelay involves an additional intermediate named Histidine-containing phosphotransfer protein (HPt). This multistep phosphorelay consists of a His-Asp-His-Asp sequential transfer of a phosphate group between first a His and an Asp of the HK protein, followed by the transfer to a conserved His of the HPt protein and finally the transfer to an Asp in the receiver domain of the RR protein.

The protein resides in the nucleus. Transcriptional activator that binds specific DNA sequence. Functions as a response regulator involved in His-to-Asp phosphorelay signal transduction system. Phosphorylation of the Asp residue in the receiver domain activates the ability of the protein to promote the transcription of target genes. May directly activate some type-A response regulators in response to cytokinins. This is Two-component response regulator ORR24 from Oryza sativa subsp. indica (Rice).